The following is a 183-amino-acid chain: NEDD8-conjugating enzyme Ubc12 (183 aa).

Met-1 is subject to N-acetylmethionine. The tract at residues Met-1–Ser-28 is disordered. Positions Ala-29–Ile-173 constitute a UBC core domain. Cys-111 (glycyl thioester intermediate) is an active-site residue.

Belongs to the ubiquitin-conjugating enzyme family. UBC12 subfamily. In terms of processing, the acetylation of Met-1 increases affinity for DCUN1D1 by about 2 orders of magnitude and is crucial for NEDD8 transfer to cullins.

The enzyme catalyses [E1 NEDD8-activating enzyme]-S-[NEDD8 protein]-yl-L-cysteine + [E2 NEDD8-conjugating enzyme]-L-cysteine = [E1 NEDD8-activating enzyme]-L-cysteine + [E2 NEDD8-conjugating enzyme]-S-[NEDD8-protein]-yl-L-cysteine.. It participates in protein modification; protein neddylation. Functionally, accepts the ubiquitin-like protein NEDD8 from the UBA3-NAE1 E1 complex and catalyzes its covalent attachment to other proteins. The specific interaction with the E3 ubiquitin ligase rbx1, but not rbx2, suggests that the rbx1-ube2m complex neddylates specific target proteins, such as cul1, cul2, cul3 and cul4. Involved in cell proliferation. This is NEDD8-conjugating enzyme Ubc12 (ube2m) from Xenopus tropicalis (Western clawed frog).